We begin with the raw amino-acid sequence, 66 residues long: MRKDIHPEYVECEVTCACGNHFVVMSNKPQLKIDICNKCHPFFTGSEKIVDTTGRVDKFKKKYNLK.

Zn(2+) is bound by residues Cys-16, Cys-18, Cys-36, and Cys-39.

It belongs to the bacterial ribosomal protein bL31 family. Type A subfamily. Part of the 50S ribosomal subunit. Zn(2+) is required as a cofactor.

Binds the 23S rRNA. This is Large ribosomal subunit protein bL31 from Nitratiruptor sp. (strain SB155-2).